The primary structure comprises 555 residues: Glutamine--tRNA ligase (555 aa).

A 'HIGH' region motif is present at residues 34 to 44 (PEPNGYLHIGH). ATP contacts are provided by residues 35–37 (EPN) and 41–47 (HIGHAKS). The L-glutamine site is built by Asp67 and Tyr212. ATP contacts are provided by residues Thr231, 261-262 (RL), and 269-271 (MSK). Residues 268 to 272 (VMSKR) carry the 'KMSKS' region motif. The tract at residues 317 to 324 (TKQDNTIE) is interaction with tRNA.

It belongs to the class-I aminoacyl-tRNA synthetase family. In terms of assembly, monomer.

The protein resides in the cytoplasm. It carries out the reaction tRNA(Gln) + L-glutamine + ATP = L-glutaminyl-tRNA(Gln) + AMP + diphosphate. The protein is Glutamine--tRNA ligase of Salmonella paratyphi B (strain ATCC BAA-1250 / SPB7).